The primary structure comprises 162 residues: Tegument protein BLRF2 (162 aa).

Positions 12–43 form a coiled coil; it reads VKAVDMSMEDMAARLARLESENKALKQQVLRG. The tract at residues 121-162 is disordered; it reads GAKGQPSPGEGTRLRESNDPNATRRARSRSRGREAKKVQISD. Residues 151 to 162 show a composition bias toward basic and acidic residues; the sequence is RGREAKKVQISD.

It belongs to the herpesviridae BLRF2 family. In terms of assembly, homooligomer; homooligomerizes and binds double-stranded DNA (dsDNA) cooperatively. Interacts with host CGAS.

It localises to the virion tegument. It is found in the host cytoplasm. Plays a role in the inhibition of host innate immune system by targeting the CGAS enzymatic activity which is the principal cytosolic DNA sensor that detects invading viral DNA. Acts by inhibiting CGAS-DNA phase separation: directly binds double-stranded DNA (dsDNA) in a length dependent but sequence independent manner and is able to form DNA-induced phase separation in infected cells. DNA phase separation of ORF52 mediates disruption of liquid-like droplets in which CGAS is activated, thereby preventing CGAS activity. The polypeptide is Tegument protein BLRF2 (Epstein-Barr virus (strain GD1) (HHV-4)).